The following is a 467-amino-acid chain: MADGSSETKSSNQMWGGRFASGPDAIMEEINASIGFDKKLYAQDIRGSIAHATMLAHKGIISAEDKDKIVHGLETILSEIESGAFDFSRRLEDIHMNIEARLASLIGPAAGRLHTARSRNDQVALDFRLWVKEELQRTEKALTGLIGAFLDRAEEHAGTVMPGFTHLQTAQPVTFGHHCMAYVEMFGRDRSRVRHAIEHMDESPIGAAALAGTGFPIDRHMTAKALGFREPTRNSIDTVSDRDFALEFLSIASIAATHLSRLAEEIVIWSTPQFGFIRLSDAFSTGSSIMPQKKNPDAAELVRAKTGRINGSLIALLTVMKGLPLAYSKDMQEDKEQVFDAAESLELAIAAMTGMVRDMTVRADRMKAAAGSGYSTATDLADWLVREAGLPFRDAHHVTGRAVALAEQKGCDLADLSLADLQAINPAITDKVFDVLTVEASVASRTSFGGTAPAEVRKQIAWWRARN.

It belongs to the lyase 1 family. Argininosuccinate lyase subfamily.

Its subcellular location is the cytoplasm. The enzyme catalyses 2-(N(omega)-L-arginino)succinate = fumarate + L-arginine. Its pathway is amino-acid biosynthesis; L-arginine biosynthesis; L-arginine from L-ornithine and carbamoyl phosphate: step 3/3. The protein is Argininosuccinate lyase of Sinorhizobium fredii (strain NBRC 101917 / NGR234).